The following is a 355-amino-acid chain: Putative transport protein PH1000 (355 aa).

The next 8 membrane-spanning stretches (helical) occupy residues 34-54, 55-75, 84-104, 158-178, 212-232, 240-260, 274-294, and 310-330; these read VTWI…LPFF, SPLF…IKLK, AILL…ILVY, FSVP…YFFL, VWLL…LIFK, ILAG…GWMI, IIAG…LPDF, and VLVL…GLII.

The protein belongs to the autoinducer-2 exporter (AI-2E) (TC 2.A.86) family.

Its subcellular location is the cell membrane. This chain is Putative transport protein PH1000, found in Pyrococcus horikoshii (strain ATCC 700860 / DSM 12428 / JCM 9974 / NBRC 100139 / OT-3).